Reading from the N-terminus, the 1620-residue chain is DNA (cytosine-5)-methyltransferase 1 (1620 aa).

The segment at 1 to 21 (MPARTAPARVPALASPAGSLP) is disordered. An interaction with DMAP1 region spans residues 1-120 (MPARTAPARV…SRPTWRAEMA (120 aa)). The tract at residues 1 to 145 (MPARTAPARV…RRSKSDSDTL (145 aa)) is interaction with DNMT3A. Interaction with the PRC2/EED-EZH2 complex regions lie at residues 1–343 (MPAR…SERK) and 305–609 (APET…RVMG). Phosphoserine is present on serine 15. Residues 16–109 (PAGSLPDHVR…TQKANGCPAN (94 aa)) form the DMAP1-binding domain. At lysine 70 the chain carries N6,N6-dimethyllysine; by EHMT2. The segment at 96 to 369 (THTLTQKANG…PECGQHLDDP (274 aa)) is disordered. The segment covering 126-137 (PRSRPKPRGPRR) has biased composition (basic residues). Position 138 is a phosphoserine (serine 138). At lysine 139 the chain carries N6-methyllysine; by SETD7. Phosphoserine is present on serine 140. A compositionally biased stretch (polar residues) spans 144 to 155 (TLSVETSPSSVA). Phosphoserine; by CK1 is present on serine 146. The interaction with DNMT3B stretch occupies residues 147 to 217 (VETSPSSVAT…SGAAAAVEKL (71 aa)). Phosphoserine is present on residues serine 150 and serine 152. The tract at residues 161-172 (RQTTITAHFTKG) is interaction with PCNA. Phosphothreonine is present on threonine 164. Residue lysine 171 is modified to N6-acetyllysine. The short motif at 175–202 (KRKPKEESEEGNSAESAAEERDQDKKRR) is the Nuclear localization signal element. Residues 192-205 (AEERDQDKKRRVVD) are compositionally biased toward basic and acidic residues. Serine 240 carries the phosphoserine modification. Basic and acidic residues-rich tracts occupy residues 246–267 (RELS…PETH) and 286–300 (QPRD…KEAE). At lysine 255 the chain carries N6-acetyllysine; alternate. A Glycyl lysine isopeptide (Lys-Gly) (interchain with G-Cter in SUMO2); alternate cross-link involves residue lysine 255. The span at 308-317 (TPEDRDEDER) shows a compositional bias: acidic residues. The DNA replication foci-targeting sequence stretch occupies residues 328 to 556 (KLESHTVPVQ…NVNRFTEDSL (229 aa)). Zn(2+) is bound by residues cysteine 359 and cysteine 362. Residue lysine 372 is modified to N6-acetyllysine. Zn(2+) contacts are provided by cysteine 420 and histidine 424. Residues serine 515 and serine 555 each carry the phosphoserine modification. The segment at 649-695 (NAMKRRRCGVCEVCQQPECGKCKACKDMVKFGGTGRSKQACLKRRCP) adopts a CXXC-type zinc-finger fold. Zn(2+)-binding residues include cysteine 656, cysteine 659, cysteine 662, cysteine 667, cysteine 670, cysteine 673, cysteine 689, and cysteine 694. An autoinhibitory linker region spans residues 696–757 (NLAVKEADDD…TYYQKVSIDE (62 aa)). Residues 696–813 (NLAVKEADDD…TDTVLGATSD (118 aa)) form an interaction with HDAC1 region. Residues 702–713 (ADDDEEADDDVS) are compositionally biased toward acidic residues. Residues 702–732 (ADDDEEADDDVSEMPSPKKLHQGKKKKQNKD) form a disordered region. Phosphoserine occurs at positions 713 and 717. The segment covering 719 to 730 (KKLHQGKKKKQN) has biased composition (basic residues). Serine 735 is subject to Phosphoserine. At lysine 752 the chain carries N6-acetyllysine. One can recognise a BAH 1 domain in the interval 758-884 (EMLEVGDCVS…QEYARFESPP (127 aa)). The residue at position 882 (serine 882) is a Phosphoserine. An N6-acetyllysine mark is found at lysine 895, lysine 961, lysine 965, and lysine 979. The 128-residue stretch at 976 to 1103 (HYRKYSDYIK…SKTKNFEDPP (128 aa)) folds into the BAH 2 domain. Positions 1097–1136 (KNFEDPPNHARSPGNKGKGKGKGKGKGKHQVSEPKEPEAA) are disordered. 6 tandem repeats follow at residues 1112–1113 (KG), 1114–1115 (KG), 1116–1117 (KG), 1118–1119 (KG), 1120–1121 (KG), and 1122–1123 (KG). The segment at 1112–1125 (KGKGKGKGKGKGKH) is 7 X 2 AA tandem repeats of K-G. A compositionally biased stretch (basic residues) spans 1113-1125 (GKGKGKGKGKGKH). Lysine 1114, lysine 1116, lysine 1118, lysine 1120, lysine 1122, and lysine 1124 each carry N6-acetyllysine. The stretch at 1124-1125 (KH) is one 7; approximate repeat. The segment at 1124–1620 (KHQVSEPKEP…KAKEEAATKD (497 aa)) is interaction with the PRC2/EED-EZH2 complex. Positions 1126 to 1135 (QVSEPKEPEA) are enriched in basic and acidic residues. An SAM-dependent MTase C5-type domain is found at 1142–1601 (LRTLDVFSGC…LEIKLCLLSS (460 aa)). The tract at residues 1142 to 1620 (LRTLDVFSGC…KAKEEAATKD (479 aa)) is catalytic. Residues serine 1149, 1153 to 1154 (GL), 1171 to 1172 (EM), and 1193 to 1194 (DC) contribute to the S-adenosyl-L-methionine site. The active site involves cysteine 1229. N6-acetyllysine occurs at positions 1352 and 1418. Valine 1582 is a binding site for S-adenosyl-L-methionine. Lysine 1611 is covalently cross-linked (Glycyl lysine isopeptide (Lys-Gly) (interchain with G-Cter in SUMO2)).

It belongs to the class I-like SAM-binding methyltransferase superfamily. C5-methyltransferase family. Homodimer. Forms a stable complex with E2F1, BB1 and HDAC1. Forms a complex with DMAP1 and HDAC2, with direct interaction. Interacts with the PRC2/EED-EZH2 complex. Probably part of a corepressor complex containing ZNF304, TRIM28, SETDB1 and DNMT1. Interacts with UHRF1; promoting its recruitment to hemimethylated DNA. Interacts with USP7, promoting its deubiquitination. Interacts with BAZ2A/TIP5. Interacts with PCNA. Interacts with MBD2 and MBD3. Interacts with DNMT3A and DNMT3B. Interacts with UBC9. Interacts with HDAC1. Interacts with CSNK1D. Interacts with SIRT7. Interacts with ZNF263; recruited to the SIX3 promoter along with other proteins involved in chromatin modification and transcriptional corepression where it contributes to transcriptional repression. Interacts with L3MBTL3 and DCAF5; the interaction requires DNMT1 methylation at Lys-139 and is necessary to target DNMT1 for ubiquitination by the CRL4-DCAF5 E3 ubiquitin ligase complex and proteasomal degradation. Interacts with PHF20L1; the interaction requires DNMT1 methylation at Lys-139 and protects DNMT1 from ubiquitination and proteasomal degradation. Post-translationally, sumoylated; sumoylation increases activity. In terms of processing, phosphorylation at Ser-146 by CK1 reduces DNA-binding activity. Acetylation on multiple lysines, mainly by KAT2B/PCAF, regulates cell cycle G(2)/M transition. Deacetylation of Lys-1352 and Lys-1418 by SIRT1 increases methyltransferase activity. Post-translationally, phosphorylation of Ser-152 by CDKs is important for enzymatic activity and protein stability. Phosphorylation of Ser-140 by AKT1 prevents methylation by SETD7 thereby increasing DNMT1 stability. In terms of processing, methylation at Lys-139 by SETD7 is necessary for the regulation of DNMT1 proteasomal degradation. Ubiquitinated by UHRF1; interaction with USP7 counteracts ubiquitination by UHRF1 by promoting deubiquitination and preventing degradation by the proteasome. As to expression, isoform 1 is expressed in embryonic stem cells and in somatic tissues. Isoform 2 is expressed in oocytes, preimplantation embryos, testis and in skeletal muscle during myogenesis.

The protein localises to the nucleus. Its subcellular location is the cytoplasm. The catalysed reaction is a 2'-deoxycytidine in DNA + S-adenosyl-L-methionine = a 5-methyl-2'-deoxycytidine in DNA + S-adenosyl-L-homocysteine + H(+). Allosterically regulated. The binding of 5-methylcytosine-containing DNA to the N-terminal parts of DNMT1 causes an allosteric activation of the catalytic domain by a direct interaction of its Zn-binding domain with the catalytic domain. Its function is as follows. Methylates CpG residues. Preferentially methylates hemimethylated DNA. Associates with DNA replication sites in S phase maintaining the methylation pattern in the newly synthesized strand, that is essential for epigenetic inheritance. Associates with chromatin during G2 and M phases to maintain DNA methylation independently of replication. It is responsible for maintaining methylation patterns established in development. DNA methylation is coordinated with methylation of histones. Mediates transcriptional repression by direct binding to HDAC2. In association with DNMT3B and via the recruitment of CTCFL/BORIS, involved in activation of BAG1 gene expression by modulating dimethylation of promoter histone H3 at H3K4 and H3K9. Probably forms a corepressor complex required for activated KRAS-mediated promoter hypermethylation and transcriptional silencing of tumor suppressor genes (TSGs) or other tumor-related genes in colorectal cancer (CRC) cells. Also required to maintain a transcriptionally repressive state of genes in undifferentiated embryonic stem cells (ESCs). Associates at promoter regions of tumor suppressor genes (TSGs) leading to their gene silencing. Promotes tumor growth. The polypeptide is DNA (cytosine-5)-methyltransferase 1 (Dnmt1) (Mus musculus (Mouse)).